The following is a 500-amino-acid chain: Protein PIGMENT DEFECTIVE 338, chloroplastic (500 aa).

A chloroplast-targeting transit peptide spans M1–R63. S1 motif domains are found at residues K156–R265, N283–K351, and G362–A431.

This sequence belongs to the bacterial ribosomal protein bS1 family. As to quaternary structure, interacts with CRP1 and PRFB3. In terms of tissue distribution, present in leaves (at protein level). Confined to leaf chlorenchyma cells.

Its subcellular location is the plastid. The protein resides in the chloroplast. Its function is as follows. RNA-binding protein that acts as an RNA chaperone to remodel RNA structure and activates their translation. Required for seed pigmentation. Necessary for chloroplast development and subsequent photosynthetic electron flow, as well as for non-photochemical quenching (NPQ). Rubisco regulatory factor which regulates the concerted biogenesis of NDH, PSI (including PsaA, PsaB, PsaD, PsaF, PsaL, PsaG, PsaK and NdhH) and Cytb(6)f (including PetA, PetB, PetC and PetD) complexes. Binds specifically to and involved in the post-transcriptional regulation of plastid-encoded mRNAs (e.g. rbcL, petA, petB, petD and Ycf1), thus modulating expression, cellular localization/compartmentalization, and photosynthetic function. This Arabidopsis thaliana (Mouse-ear cress) protein is Protein PIGMENT DEFECTIVE 338, chloroplastic.